The following is an 88-amino-acid chain: Small ribosomal subunit protein uS17 (88 aa).

Belongs to the universal ribosomal protein uS17 family. In terms of assembly, part of the 30S ribosomal subunit.

One of the primary rRNA binding proteins, it binds specifically to the 5'-end of 16S ribosomal RNA. The polypeptide is Small ribosomal subunit protein uS17 (Nitrosospira multiformis (strain ATCC 25196 / NCIMB 11849 / C 71)).